The primary structure comprises 117 residues: Ribosome-binding factor A (117 aa).

The protein belongs to the RbfA family. As to quaternary structure, monomer. Binds 30S ribosomal subunits, but not 50S ribosomal subunits or 70S ribosomes.

It localises to the cytoplasm. In terms of biological role, one of several proteins that assist in the late maturation steps of the functional core of the 30S ribosomal subunit. Associates with free 30S ribosomal subunits (but not with 30S subunits that are part of 70S ribosomes or polysomes). Required for efficient processing of 16S rRNA. May interact with the 5'-terminal helix region of 16S rRNA. This is Ribosome-binding factor A from Leuconostoc mesenteroides subsp. mesenteroides (strain ATCC 8293 / DSM 20343 / BCRC 11652 / CCM 1803 / JCM 6124 / NCDO 523 / NBRC 100496 / NCIMB 8023 / NCTC 12954 / NRRL B-1118 / 37Y).